We begin with the raw amino-acid sequence, 329 residues long: PDZ and LIM domain protein 1 (329 aa).

An N-acetylthreonine modification is found at Thr-2. In terms of domain architecture, PDZ spans 3-85 (TQQIDLQGPG…NLTLTVARSE (83 aa)). Ser-90 and Ser-130 each carry phosphoserine. Residue Tyr-144 is modified to Phosphotyrosine. The LIM zinc-binding domain maps to 258-317 (PMCDKCGTGIVGVFVKLRDRHRHPECYVCTDCGTNLKQKGHFFVEDQIYCEKHARERVTP). 8 residues coordinate Zn(2+): Cys-260, Cys-263, His-280, Cys-283, Cys-286, Cys-289, Cys-307, and His-310. Phosphothreonine is present on Thr-316. Tyr-321 bears the Phosphotyrosine mark.

Interacts with ACTN1, ACTN2 and ACTN4. Interacts with PDLIM4. As to expression, strongly expressed in the heart and skeletal muscle, moderately expressed in the spleen, small intestine, colon, placenta, and lung. A lower level expression is seen in liver, thymus, kidney, prostate and pancreas and is not found in the brain, testis, ovary, and peripheral blood leukocytes.

It is found in the cytoplasm. The protein resides in the cytoskeleton. The protein localises to the myofibril. It localises to the sarcomere. Its subcellular location is the z line. Its function is as follows. Cytoskeletal protein that may act as an adapter that brings other proteins (like kinases) to the cytoskeleton. Involved in assembly, disassembly and directioning of stress fibers in fibroblasts. Required for the localization of ACTN1 and PALLD to stress fibers. Required for cell migration and in maintaining cell polarity of fibroblasts. This is PDZ and LIM domain protein 1 (PDLIM1) from Homo sapiens (Human).